A 189-amino-acid polypeptide reads, in one-letter code: Myb-like protein T (189 aa).

The Myb-like domain maps to 121 to 172 (NWSPDEQKALMVEVSTLGNKSEINWFFISQQLFLKGISRNARECQRKHESIQ).

The protein is Myb-like protein T (mybT) of Dictyostelium discoideum (Social amoeba).